We begin with the raw amino-acid sequence, 176 residues long: Large ribosomal subunit protein uL16 (176 aa).

The protein belongs to the universal ribosomal protein uL16 family.

In Picrophilus torridus (strain ATCC 700027 / DSM 9790 / JCM 10055 / NBRC 100828 / KAW 2/3), this protein is Large ribosomal subunit protein uL16.